A 567-amino-acid chain; its full sequence is MSFFLRLAALLLLHTSIAQASHCPDWSTKQARTEVAQLRATLANWDDHYHRQGIALVADELYDQARHHLLHLQQCFGQEFTDPSPLASARGPIAHPVAHTGVEKLHDAAAVARWMTGKKGVWVQPKVDGVAVSLVYRQGRLVQLLSRGDGLQGHDWSRHIKDLDSITRQLPQPLDVVLQGELYLRLQAHVQAEAGSSNVRGTVAGMLARKQLGPEPGASIGLFVWDWPHGPDNQGERLTQLAAWGFPDSQRFSTAIDTPEEATHWRLHWYRSPLPFATDGVILRQDSRPPADRWQPNAPYWIAAWKYPFAQALAEVREVRFLIGRTGKVTPLLRLKPVTLDDRRISQVSLGSLARWRALDIRPGDQVAISLAGLTIPRFDQVVHRAVERQVLPVPEAEQYGQHSCWQASDGCQEQFIARLVWLSGKQGLAMPGTGKGTWKRLVQAGLVTSLTDWLTLDAQQLLSVPGISRKTATQLQRSFDIGRNRPFAQWRKGLGVPAPAQVPRDENWQTLAGRSASDWQTLPGIGATRATQLANFFTHEQVQRIATLLGTRGIDGFHGTDDVGSQ.

K126 functions as the N6-AMP-lysine intermediate in the catalytic mechanism.

It belongs to the NAD-dependent DNA ligase family. LigB subfamily.

The enzyme catalyses NAD(+) + (deoxyribonucleotide)n-3'-hydroxyl + 5'-phospho-(deoxyribonucleotide)m = (deoxyribonucleotide)n+m + AMP + beta-nicotinamide D-nucleotide.. Its function is as follows. Catalyzes the formation of phosphodiester linkages between 5'-phosphoryl and 3'-hydroxyl groups in double-stranded DNA using NAD as a coenzyme and as the energy source for the reaction. This is DNA ligase B from Pseudomonas putida (strain W619).